The primary structure comprises 375 residues: Growth/differentiation factor 8 (375 aa).

The first 23 residues, 1 to 23, serve as a signal peptide directing secretion; the sequence is MQKLAVYVYIYLFMQIAVDPVAL. Positions 24 to 266 are excised as a propeptide; the sequence is DGSSQPTENA…VTDTPKRSRR (243 aa). Asn71 carries an N-linked (GlcNAc...) asparagine glycan. 4 cysteine pairs are disulfide-bonded: Cys272–Cys282, Cys281–Cys340, Cys309–Cys372, and Cys313–Cys374.

This sequence belongs to the TGF-beta family. Homodimer; disulfide-linked.

Its subcellular location is the secreted. In terms of biological role, acts specifically as a negative regulator of skeletal muscle growth. The polypeptide is Growth/differentiation factor 8 (MSTN) (Gallus gallus (Chicken)).